Consider the following 294-residue polypeptide: UDP-3-O-acyl-N-acetylglucosamine deacetylase (294 aa).

The Zn(2+) site is built by His-75, His-232, and Asp-236. The active-site Proton donor is the His-259.

It belongs to the LpxC family. Zn(2+) serves as cofactor.

It carries out the reaction a UDP-3-O-[(3R)-3-hydroxyacyl]-N-acetyl-alpha-D-glucosamine + H2O = a UDP-3-O-[(3R)-3-hydroxyacyl]-alpha-D-glucosamine + acetate. It participates in glycolipid biosynthesis; lipid IV(A) biosynthesis; lipid IV(A) from (3R)-3-hydroxytetradecanoyl-[acyl-carrier-protein] and UDP-N-acetyl-alpha-D-glucosamine: step 2/6. Catalyzes the hydrolysis of UDP-3-O-myristoyl-N-acetylglucosamine to form UDP-3-O-myristoylglucosamine and acetate, the committed step in lipid A biosynthesis. The chain is UDP-3-O-acyl-N-acetylglucosamine deacetylase from Campylobacter fetus subsp. fetus (strain 82-40).